We begin with the raw amino-acid sequence, 184 residues long: Large ribosomal subunit protein uL15 (184 aa).

A disordered region spans residues Met-1–Lys-62. Over residues Arg-21–Asn-35 the composition is skewed to gly residues.

The protein belongs to the universal ribosomal protein uL15 family. In terms of assembly, part of the 50S ribosomal subunit.

Functionally, binds to the 23S rRNA. The chain is Large ribosomal subunit protein uL15 from Chlorobaculum parvum (strain DSM 263 / NCIMB 8327) (Chlorobium vibrioforme subsp. thiosulfatophilum).